The primary structure comprises 369 residues: Chaperone protein DnaJ (369 aa).

Positions 4 to 69 constitute a J domain; it reads SYYEILEVEK…KKRALYDRYG (66 aa). The CR-type zinc finger occupies 130–207; sequence GCKKTIKAQY…CKGKTYILKD (78 aa). Zn(2+) is bound by residues Cys-143, Cys-146, Cys-159, Cys-162, Cys-181, Cys-184, Cys-195, and Cys-198. CXXCXGXG motif repeat units follow at residues 143 to 150, 159 to 166, 181 to 188, and 195 to 202; these read CESCDGTG, CKQCNGQG, CGACQGKG, and CQACKGKT.

This sequence belongs to the DnaJ family. In terms of assembly, homodimer. It depends on Zn(2+) as a cofactor.

It is found in the cytoplasm. Its function is as follows. Participates actively in the response to hyperosmotic and heat shock by preventing the aggregation of stress-denatured proteins and by disaggregating proteins, also in an autonomous, DnaK-independent fashion. Unfolded proteins bind initially to DnaJ; upon interaction with the DnaJ-bound protein, DnaK hydrolyzes its bound ATP, resulting in the formation of a stable complex. GrpE releases ADP from DnaK; ATP binding to DnaK triggers the release of the substrate protein, thus completing the reaction cycle. Several rounds of ATP-dependent interactions between DnaJ, DnaK and GrpE are required for fully efficient folding. Also involved, together with DnaK and GrpE, in the DNA replication of plasmids through activation of initiation proteins. The protein is Chaperone protein DnaJ of Helicobacter pylori (strain J99 / ATCC 700824) (Campylobacter pylori J99).